The following is a 197-amino-acid chain: Recombination protein RecR (197 aa).

A C4-type zinc finger spans residues 57 to 72 (CSVCFAITEDDPCWIC). Residues 79-174 (GTICVVEEPQ…KVTRLAHGIP (96 aa)) form the Toprim domain.

This sequence belongs to the RecR family.

Its function is as follows. May play a role in DNA repair. It seems to be involved in an RecBC-independent recombinational process of DNA repair. It may act with RecF and RecO. This chain is Recombination protein RecR, found in Citrifermentans bemidjiense (strain ATCC BAA-1014 / DSM 16622 / JCM 12645 / Bem) (Geobacter bemidjiensis).